The primary structure comprises 341 residues: Serine/threonine-protein kinase PDIK1L (341 aa).

The region spanning tyrosine 8–phenylalanine 334 is the Protein kinase domain. ATP contacts are provided by residues valine 14 to valine 22 and lysine 37. The active-site Proton acceptor is the aspartate 164.

The protein belongs to the protein kinase superfamily. Ser/Thr protein kinase family.

The protein resides in the nucleus. The catalysed reaction is L-seryl-[protein] + ATP = O-phospho-L-seryl-[protein] + ADP + H(+). It carries out the reaction L-threonyl-[protein] + ATP = O-phospho-L-threonyl-[protein] + ADP + H(+). The polypeptide is Serine/threonine-protein kinase PDIK1L (Pdik1l) (Mus musculus (Mouse)).